A 546-amino-acid polypeptide reads, in one-letter code: MAAKDVKFGDSARKKMLVGVNVLADAVKATLGPKGRNVVLAKSFGAPTITKDGVSVAKEIELKDAFENMGAQLVKEVASKANDAAGDGTTTATVLAQAIVNEGLKAVAAGMNPMDLKRGIDKATAAVVAELKNLSKPCADSKAIAQVGTISANSDNSIGEIIAEAMEKVGKEGVITVEEGSGLENELSVVEGMQFDRGYLSPYFVNKPDTMVAELEGPLLLLVDKKISNIRELLPVLEAVAKAGRPLLIVAEDVEGEALATLVVNNMRGIVKVAAVKAPGFGDRRKAMLQDIAVLTGGQVISEEIGLSLETATLEHLGNAKRVILSKENTTIIDGAGADTEIEARVKQIRAQIEETSSDYDREKLQERLAKLAGGVAVIKVGAGTEVEMKEKKARVEDALHATRAAVEEGVVPGGGVALVRALAAIIDLKGDNEDQNVGIALLRRAVESPLRQITANAGDEPSVVADKVKQGSGNFGYNAATGEYGDMIEMGILDPAKVTRSALQAAASIGGLMITTEAMVADLPEDKPAAGMPDMGGMGGMGGMM.

Residues 30–33 (TLGP), K51, 87–91 (DGTTT), G415, 479–481 (NAA), and D495 contribute to the ATP site.

Belongs to the chaperonin (HSP60) family. As to quaternary structure, forms a cylinder of 14 subunits composed of two heptameric rings stacked back-to-back. Interacts with the co-chaperonin GroES.

Its subcellular location is the cytoplasm. The enzyme catalyses ATP + H2O + a folded polypeptide = ADP + phosphate + an unfolded polypeptide.. Together with its co-chaperonin GroES, plays an essential role in assisting protein folding. The GroEL-GroES system forms a nano-cage that allows encapsulation of the non-native substrate proteins and provides a physical environment optimized to promote and accelerate protein folding. The protein is Chaperonin GroEL of Pseudomonas putida (strain ATCC 47054 / DSM 6125 / CFBP 8728 / NCIMB 11950 / KT2440).